We begin with the raw amino-acid sequence, 172 residues long: Shikimate kinase (172 aa).

Residue 14 to 19 participates in ATP binding; the sequence is GAGKST. S18 is a binding site for Mg(2+). Positions 36, 60, and 82 each coordinate substrate. ATP is bound at residue R120. Residue R140 participates in substrate binding. Residue Q157 coordinates ATP.

Belongs to the shikimate kinase family. Monomer. Mg(2+) is required as a cofactor.

It is found in the cytoplasm. It catalyses the reaction shikimate + ATP = 3-phosphoshikimate + ADP + H(+). It participates in metabolic intermediate biosynthesis; chorismate biosynthesis; chorismate from D-erythrose 4-phosphate and phosphoenolpyruvate: step 5/7. Catalyzes the specific phosphorylation of the 3-hydroxyl group of shikimic acid using ATP as a cosubstrate. The chain is Shikimate kinase from Aeromonas salmonicida (strain A449).